We begin with the raw amino-acid sequence, 87 residues long: Small ribosomal subunit protein uS17 (87 aa).

Belongs to the universal ribosomal protein uS17 family. Part of the 30S ribosomal subunit.

One of the primary rRNA binding proteins, it binds specifically to the 5'-end of 16S ribosomal RNA. This chain is Small ribosomal subunit protein uS17, found in Dichelobacter nodosus (strain VCS1703A).